Consider the following 263-residue polypeptide: Probable methylthioribulose-1-phosphate dehydratase (263 aa).

A substrate-binding site is contributed by Cys102. 2 residues coordinate Zn(2+): His120 and His122. The active-site Proton donor/acceptor is the Glu144. A Zn(2+)-binding site is contributed by His200.

It belongs to the aldolase class II family. MtnB subfamily. The cofactor is Zn(2+).

The protein localises to the cytoplasm. It catalyses the reaction 5-(methylsulfanyl)-D-ribulose 1-phosphate = 5-methylsulfanyl-2,3-dioxopentyl phosphate + H2O. Its pathway is amino-acid biosynthesis; L-methionine biosynthesis via salvage pathway; L-methionine from S-methyl-5-thio-alpha-D-ribose 1-phosphate: step 2/6. Catalyzes the dehydration of methylthioribulose-1-phosphate (MTRu-1-P) into 2,3-diketo-5-methylthiopentyl-1-phosphate (DK-MTP-1-P). In Caenorhabditis elegans, this protein is Probable methylthioribulose-1-phosphate dehydratase.